The primary structure comprises 167 residues: Bacterial non-heme ferritin (167 aa).

The region spanning 1–145 (MLSKEVVKLL…GIVDKIKLIG (145 aa)) is the Ferritin-like diiron domain. Residues Glu17, Glu50, His53, Glu94, and Gln127 each contribute to the Fe cation site.

This sequence belongs to the ferritin family. Prokaryotic subfamily. As to quaternary structure, homooligomer of 24 subunits that assemble into a spherical protein shell (12 +/- 1 nM diameter) that can sequester at least 2000 iron atoms.

It localises to the cytoplasm. It catalyses the reaction 4 Fe(2+) + O2 + 6 H2O = 4 iron(III) oxide-hydroxide + 12 H(+). In terms of biological role, iron-storage protein. The sequence is that of Bacterial non-heme ferritin (ftn) from Campylobacter jejuni subsp. jejuni serotype O:2 (strain ATCC 700819 / NCTC 11168).